A 348-amino-acid polypeptide reads, in one-letter code: Dihydroorotase (348 aa).

Zn(2+)-binding residues include His14 and His16. Residues 16 to 18 (HLR) and Asn42 contribute to the substrate site. Zn(2+) is bound by residues Lys100, His137, and His175. The residue at position 100 (Lys100) is an N6-carboxylysine. His137 lines the substrate pocket. Leu220 lines the substrate pocket. Residue Asp248 coordinates Zn(2+). Asp248 is an active-site residue. Substrate is bound by residues His252 and Ala264.

It belongs to the metallo-dependent hydrolases superfamily. DHOase family. Class II DHOase subfamily. Homodimer. Zn(2+) serves as cofactor.

It carries out the reaction (S)-dihydroorotate + H2O = N-carbamoyl-L-aspartate + H(+). It participates in pyrimidine metabolism; UMP biosynthesis via de novo pathway; (S)-dihydroorotate from bicarbonate: step 3/3. Catalyzes the reversible cyclization of carbamoyl aspartate to dihydroorotate. The polypeptide is Dihydroorotase (Ectopseudomonas mendocina (strain ymp) (Pseudomonas mendocina)).